Here is a 156-residue protein sequence, read N- to C-terminus: MGSDTEAEKSIQKEKKKYAITLAPIAKPLAGKKLQKRTFKLIQKAAGKKCLKRGVKEVVKSIRRGQKGLCVIAGNISPIDVITHLPILCEEAGVPYVYVPSKEDLAQAGATKRPTCCVLVMLKPAKGDLTAEELAKLKTDYEQVSDDIKELATSVI.

It belongs to the eukaryotic ribosomal protein eL8 family. As to quaternary structure, component of the small nucleolar ribonucleoprotein particle containing H/ACA-type snoRNAs (H/ACA snoRNPs).

The protein resides in the nucleus. It is found in the nucleolus. Functionally, required for ribosome biogenesis. Part of a complex which catalyzes pseudouridylation of rRNA. This involves the isomerization of uridine such that the ribose is subsequently attached to C5, instead of the normal N1. Pseudouridine ('psi') residues may serve to stabilize the conformation of rRNAs. The polypeptide is H/ACA ribonucleoprotein complex subunit 2-like protein (Arabidopsis thaliana (Mouse-ear cress)).